Consider the following 539-residue polypeptide: Chaperonin GroEL (539 aa).

Residues 29 to 32 (TIGP), 86 to 90 (DGTTT), G414, and D493 each bind ATP.

This sequence belongs to the chaperonin (HSP60) family. As to quaternary structure, forms a cylinder of 14 subunits composed of two heptameric rings stacked back-to-back. Interacts with the co-chaperonin GroES.

Its subcellular location is the cytoplasm. The enzyme catalyses ATP + H2O + a folded polypeptide = ADP + phosphate + an unfolded polypeptide.. Together with its co-chaperonin GroES, plays an essential role in assisting protein folding. The GroEL-GroES system forms a nano-cage that allows encapsulation of the non-native substrate proteins and provides a physical environment optimized to promote and accelerate protein folding. The polypeptide is Chaperonin GroEL (Staphylococcus aureus).